The primary structure comprises 158 residues: Endoribonuclease YbeY (158 aa).

Residues histidine 119, histidine 123, and histidine 129 each coordinate Zn(2+).

This sequence belongs to the endoribonuclease YbeY family. Zn(2+) is required as a cofactor.

It localises to the cytoplasm. Its function is as follows. Single strand-specific metallo-endoribonuclease involved in late-stage 70S ribosome quality control and in maturation of the 3' terminus of the 16S rRNA. This chain is Endoribonuclease YbeY, found in Acinetobacter baumannii (strain ACICU).